A 1067-amino-acid chain; its full sequence is Carbamoyl phosphate synthase large chain (1067 aa).

Residues 1–401 (MPLNKDIKKV…AFLKGIRSLE (401 aa)) form a carboxyphosphate synthetic domain region. ATP is bound by residues Arg-129, Arg-169, Gly-175, Gly-176, Lys-208, Val-210, Glu-215, Gly-241, Ile-242, His-243, Gln-284, and Glu-298. The ATP-grasp 1 domain maps to 133 to 327 (RDMMNRINQP…IAKVAAKIAL (195 aa)). Residues Gln-284, Glu-298, and Asn-300 each coordinate Mg(2+). Mn(2+) contacts are provided by Gln-284, Glu-298, and Asn-300. The tract at residues 402–549 (IGKYSLEHKK…YSTYEQYDEV (148 aa)) is oligomerization domain. Residues 550–932 (VVSDNKKVVV…ALYKGFVGAS (383 aa)) are carbamoyl phosphate synthetic domain. The ATP-grasp 2 domain occupies 674-864 (DDLLERLNIA…IVDIATRIML (191 aa)). The ATP site is built by Arg-710, Lys-749, Leu-751, Glu-755, Gly-780, Val-781, His-782, Ser-783, Gln-823, and Glu-835. Mg(2+) contacts are provided by Gln-823, Glu-835, and Asn-837. Mn(2+) contacts are provided by Gln-823, Glu-835, and Asn-837. The MGS-like domain occupies 933–1067 (MYTGDKGKTI…NRELEVFNLI (135 aa)). Residues 933-1067 (MYTGDKGKTI…NRELEVFNLI (135 aa)) are allosteric domain.

The protein belongs to the CarB family. As to quaternary structure, composed of two chains; the small (or glutamine) chain promotes the hydrolysis of glutamine to ammonia, which is used by the large (or ammonia) chain to synthesize carbamoyl phosphate. Tetramer of heterodimers (alpha,beta)4. Requires Mg(2+) as cofactor. It depends on Mn(2+) as a cofactor.

It catalyses the reaction hydrogencarbonate + L-glutamine + 2 ATP + H2O = carbamoyl phosphate + L-glutamate + 2 ADP + phosphate + 2 H(+). The enzyme catalyses hydrogencarbonate + NH4(+) + 2 ATP = carbamoyl phosphate + 2 ADP + phosphate + 2 H(+). Its pathway is amino-acid biosynthesis; L-arginine biosynthesis; carbamoyl phosphate from bicarbonate: step 1/1. It functions in the pathway pyrimidine metabolism; UMP biosynthesis via de novo pathway; (S)-dihydroorotate from bicarbonate: step 1/3. Functionally, large subunit of the glutamine-dependent carbamoyl phosphate synthetase (CPSase). CPSase catalyzes the formation of carbamoyl phosphate from the ammonia moiety of glutamine, carbonate, and phosphate donated by ATP, constituting the first step of 2 biosynthetic pathways, one leading to arginine and/or urea and the other to pyrimidine nucleotides. The large subunit (synthetase) binds the substrates ammonia (free or transferred from glutamine from the small subunit), hydrogencarbonate and ATP and carries out an ATP-coupled ligase reaction, activating hydrogencarbonate by forming carboxy phosphate which reacts with ammonia to form carbamoyl phosphate. This is Carbamoyl phosphate synthase large chain from Clostridium perfringens (strain SM101 / Type A).